We begin with the raw amino-acid sequence, 164 residues long: Crossover junction endodeoxyribonuclease RuvC (164 aa).

Residues Asp7, Glu67, and Asp140 contribute to the active site. Residues Asp7, Glu67, and Asp140 each coordinate Mg(2+).

Belongs to the RuvC family. Homodimer which binds Holliday junction (HJ) DNA. The HJ becomes 2-fold symmetrical on binding to RuvC with unstacked arms; it has a different conformation from HJ DNA in complex with RuvA. In the full resolvosome a probable DNA-RuvA(4)-RuvB(12)-RuvC(2) complex forms which resolves the HJ. Mg(2+) is required as a cofactor.

It is found in the cytoplasm. The enzyme catalyses Endonucleolytic cleavage at a junction such as a reciprocal single-stranded crossover between two homologous DNA duplexes (Holliday junction).. The RuvA-RuvB-RuvC complex processes Holliday junction (HJ) DNA during genetic recombination and DNA repair. Endonuclease that resolves HJ intermediates. Cleaves cruciform DNA by making single-stranded nicks across the HJ at symmetrical positions within the homologous arms, yielding a 5'-phosphate and a 3'-hydroxyl group; requires a central core of homology in the junction. The consensus cleavage sequence is 5'-(A/T)TT(C/G)-3'. Cleavage occurs on the 3'-side of the TT dinucleotide at the point of strand exchange. HJ branch migration catalyzed by RuvA-RuvB allows RuvC to scan DNA until it finds its consensus sequence, where it cleaves and resolves the cruciform DNA. This is Crossover junction endodeoxyribonuclease RuvC from Chloroflexus aggregans (strain MD-66 / DSM 9485).